We begin with the raw amino-acid sequence, 334 residues long: NADH dehydrogenase (ubiquinone) complex I, assembly factor 6 homolog (334 aa).

Residues 1–11 constitute a mitochondrion transit peptide; it reads MRRLVRNWNCR.

This sequence belongs to the NDUFAF6 family. In terms of assembly, associates with mitochondrial complex I assembly intermediates during its biogenesis. Forms a complex including sicily, ND-42 and Hsp83; the complex is necessary to chaperone ND-42 in the cytoplasm before mitochondrial import; the interaction between sicily and ND-42 is direct and occurs preferably between the unprocessed forms in the cytoplasm; the interaction with Hsp83 is direct. Interacts with ND-30; interaction is stronger between the unprocessed forms in the cytoplasm. In terms of tissue distribution, expressed in the ventral nerve cord, larval brain, motor neuron axons, imaginal disks, and muscles (at protein level).

It is found in the mitochondrion inner membrane. The protein localises to the cytoplasm. The protein resides in the cytosol. Its function is as follows. Involved in the assembly of mitochondrial NADH:ubiquinone oxidoreductase complex (Complex I) at early stages. Interacts with cytosolic Hsp90 to chaperone the Complex I subunit ND-42 in the cytoplasm. This Drosophila melanogaster (Fruit fly) protein is NADH dehydrogenase (ubiquinone) complex I, assembly factor 6 homolog.